Here is a 609-residue protein sequence, read N- to C-terminus: Hemagglutinin/proteinase (609 aa).

The N-terminal stretch at 1-24 (MKMIQRPLNWLVLAGAATGFPLYA) is a signal peptide. A propeptide spanning residues 25-196 (AQMVTIDDAS…LDQWDGINHA (172 aa)) is cleaved from the precursor. His-343 contacts Zn(2+). Residue Glu-344 is part of the active site. The Zn(2+) site is built by His-347 and Glu-367. The active-site Proton donor is His-426.

The protein belongs to the peptidase M4 family. Zn(2+) serves as cofactor.

Its subcellular location is the secreted. Its function is as follows. May play a role in the pathogenesis of cholera. Hap nicks and activates the A subunit of cholera enterotoxin and related enterotoxins. The chain is Hemagglutinin/proteinase (hap) from Vibrio cholerae serotype O1 (strain ATCC 39315 / El Tor Inaba N16961).